A 157-amino-acid chain; its full sequence is Protein FAM219A (157 aa).

Met-1 carries the N-acetylmethionine modification. The interval 1–103 (MMEEIDRFQD…SRYSSSGYSS (103 aa)) is disordered. Basic and acidic residues predominate over residues 17-33 (SDRDCDAREEKQRELAR). The segment covering 38-52 (KNGSMGSPVNQQPKK) has biased composition (polar residues). Ser-44 and Ser-74 each carry phosphoserine. Thr-85 carries the post-translational modification Phosphothreonine. Residues Ser-87 and Ser-94 each carry the phosphoserine modification. Low complexity predominate over residues 94-103 (SRYSSSGYSS).

The protein belongs to the FAM219 family.

The sequence is that of Protein FAM219A (Fam219a) from Mus musculus (Mouse).